The sequence spans 390 residues: F-box/kelch-repeat protein At3g04660 (390 aa).

Positions 18 to 67 (YDPSSILPLELKIEILMKSPPKSIAKLGFVSNHWSSIIRGQVFTDLYMRR) constitute an F-box domain. Kelch repeat units lie at residues 115-161 (FSPP…FGYD) and 272-323 (MVDH…DQRV).

As to quaternary structure, part of a SCF (ASK-cullin-F-box) protein ligase complex. Interacts with SKP1A/ASK1, SKP1B/ASK2, ASK11 and ASK13.

It is found in the nucleus. Its pathway is protein modification; protein ubiquitination. Functionally, component of SCF(ASK-cullin-F-box) E3 ubiquitin ligase complexes, which may mediate the ubiquitination and subsequent proteasomal degradation of target proteins. The protein is F-box/kelch-repeat protein At3g04660 of Arabidopsis thaliana (Mouse-ear cress).